A 630-amino-acid chain; its full sequence is L-amino-acid oxidase (630 aa).

The signal sequence occupies residues 1 to 21 (MAGLALRLVLAATLLGLAGSL). C35 and C198 form a disulfide bridge. N53 carries an N-linked (GlcNAc...) asparagine glycan. Residues 68 to 69 (VA), 88 to 89 (EA), R96, and 112 to 115 (GAMR) contribute to the FAD site. Substrate is bound at residue R115. Residues N133 and N219 are each glycosylated (N-linked (GlcNAc...) asparagine). Residue V286 participates in FAD binding. Substrate is bound at residue Y395. FAD is bound by residues E479 and 486 to 491 (GWVETA). 486 to 487 (GW) is a binding site for substrate. The segment at 532-554 (GERPEEQQAREEVSPDEQEPSHK) is disordered.

It belongs to the flavin monoamine oxidase family. FIG1 subfamily. It depends on FAD as a cofactor. Primarily found in immune tissues. In terms of tissue distribution, primarily found in immune tissues, mostly in B-lymphocytes. As to expression, restricted to the testis, predominantly in Sertoli cells at the periphery of the ducts, and the brain, including Purkinje cells, hippocampus and mitral cells in the olfactory bulb. No isoform 2 expression in fetal tissues.

The protein localises to the secreted. Its subcellular location is the cytoplasmic vesicle. It is found in the secretory vesicle. The protein resides in the acrosome. It localises to the lysosome. The enzyme catalyses an L-alpha-amino acid + O2 + H2O = a 2-oxocarboxylate + H2O2 + NH4(+). It carries out the reaction L-tryptophan + O2 + H2O = indole-3-pyruvate + H2O2 + NH4(+). The catalysed reaction is L-phenylalanine + O2 + H2O = 3-phenylpyruvate + H2O2 + NH4(+). It catalyses the reaction L-tyrosine + O2 + H2O = 3-(4-hydroxyphenyl)pyruvate + H2O2 + NH4(+). The enzyme catalyses L-arginine + O2 + H2O = 5-guanidino-2-oxopentanoate + H2O2 + NH4(+). It participates in amino-acid degradation; L-tryptophan degradation via pyruvate pathway. Its function is as follows. Secreted L-amino-acid oxidase that acts as a key immunoregulator. Has preference for L-aromatic amino acids: converts phenylalanine (Phe), tyrosine (Tyr) and tryptophan (Trp) to phenylpyruvic acid (PP), hydroxyphenylpyruvic acid (HPP), and indole-3-pyruvic acid (I3P), respectively. Also has weak L-arginine oxidase activity. Acts as a negative regulator of anti-tumor immunity by mediating Trp degradation via an indole pyruvate pathway that activates the transcription factor AHR. IL4I1-mediated Trp catabolism generates I3P, giving rise to indole metabolites (indole-3-acetic acid (IAA) and indole-3-aldehyde (I3A)) and kynurenic acid, which act as ligands for AHR, a ligand-activated transcription factor that plays important roles in immunity and cancer. AHR activation by indoles following IL4I1-mediated Trp degradation enhances tumor progression by promoting cancer cell motility and suppressing adaptive immunity. Also has an immunoregulatory function in some immune cell, probably by mediating Trp degradation and promoting downstream AHR activation: inhibits T-cell activation and proliferation, promotes the differentiation of naive CD4(+) T-cells into FOXP3(+) regulatory T-cells (Treg) and regulates the development and function of B-cells. Also regulates M2 macrophage polarization by inhibiting T-cell activation. Also has antibacterial properties by inhibiting growth of Gram negative and Gram positive bacteria through the production of NH4(+) and H2O2. This chain is L-amino-acid oxidase, found in Mus musculus (Mouse).